A 213-amino-acid chain; its full sequence is 3-demethoxyubiquinol 3-hydroxylase (213 aa).

Residues Glu-62, Glu-92, His-95, Glu-144, Glu-176, and His-179 each coordinate Fe cation.

It belongs to the COQ7 family. Fe cation is required as a cofactor.

The protein resides in the cell membrane. It catalyses the reaction a 5-methoxy-2-methyl-3-(all-trans-polyprenyl)benzene-1,4-diol + AH2 + O2 = a 3-demethylubiquinol + A + H2O. It participates in cofactor biosynthesis; ubiquinone biosynthesis. Catalyzes the hydroxylation of 2-nonaprenyl-3-methyl-6-methoxy-1,4-benzoquinol during ubiquinone biosynthesis. This Psychrobacter sp. (strain PRwf-1) protein is 3-demethoxyubiquinol 3-hydroxylase.